Consider the following 451-residue polypeptide: Probable tyrosyl-DNA phosphodiesterase (451 aa).

Residues 1-34 (MKRTIQETPGPSSTTVPPPKKLNSQRNGSNLEPG) are disordered. Over residues 22-32 (LNSQRNGSNLE) the composition is skewed to polar residues. Residue H131 is the Nucleophile of the active site. K133 contacts substrate. Residues 266–269 (SIGS) are interaction with DNA. H356 serves as the catalytic Proton donor/acceptor. K358 serves as a coordination point for substrate.

It belongs to the tyrosyl-DNA phosphodiesterase family.

Its subcellular location is the nucleus. In terms of biological role, DNA repair enzyme that can remove a variety of covalent adducts from DNA through hydrolysis of a 3'-phosphodiester bond, giving rise to DNA with a free 3' phosphate. Catalyzes the hydrolysis of dead-end complexes between DNA and the topoisomerase I active site tyrosine residue. Hydrolyzes 3'-phosphoglycolates on protruding 3' ends on DNA double-strand breaks due to DNA damage by radiation and free radicals. Acts on blunt-ended double-strand DNA breaks and on single-stranded DNA. May have low 3'exonuclease activity and may be able to remove a single nucleoside from the 3'end of DNA and RNA molecules with 3'hydroxyl groups. Has no exonuclease activity towards DNA or RNA with a 3'phosphate. The sequence is that of Probable tyrosyl-DNA phosphodiesterase from Caenorhabditis elegans.